A 350-amino-acid chain; its full sequence is Holliday junction branch migration complex subunit RuvB (350 aa).

The large ATPase domain (RuvB-L) stretch occupies residues 4-184; the sequence is ADRIVTASSR…FGIVQRLEFY (181 aa). ATP contacts are provided by residues isoleucine 23, arginine 24, glycine 65, lysine 68, threonine 69, threonine 70, 131-133, arginine 174, tyrosine 184, and arginine 221; that span reads EDF. Threonine 69 lines the Mg(2+) pocket. The segment at 185 to 255 is small ATPAse domain (RuvB-S); that stretch reads STEDLATIVR…IADLALNMLD (71 aa). Positions 258–350 are head domain (RuvB-H); the sequence is ERGFDHQDRR…TPDLFEGDIV (93 aa). 3 residues coordinate DNA: arginine 294, arginine 313, and arginine 318.

Belongs to the RuvB family. Homohexamer. Forms an RuvA(8)-RuvB(12)-Holliday junction (HJ) complex. HJ DNA is sandwiched between 2 RuvA tetramers; dsDNA enters through RuvA and exits via RuvB. An RuvB hexamer assembles on each DNA strand where it exits the tetramer. Each RuvB hexamer is contacted by two RuvA subunits (via domain III) on 2 adjacent RuvB subunits; this complex drives branch migration. In the full resolvosome a probable DNA-RuvA(4)-RuvB(12)-RuvC(2) complex forms which resolves the HJ.

It localises to the cytoplasm. The enzyme catalyses ATP + H2O = ADP + phosphate + H(+). The RuvA-RuvB-RuvC complex processes Holliday junction (HJ) DNA during genetic recombination and DNA repair, while the RuvA-RuvB complex plays an important role in the rescue of blocked DNA replication forks via replication fork reversal (RFR). RuvA specifically binds to HJ cruciform DNA, conferring on it an open structure. The RuvB hexamer acts as an ATP-dependent pump, pulling dsDNA into and through the RuvAB complex. RuvB forms 2 homohexamers on either side of HJ DNA bound by 1 or 2 RuvA tetramers; 4 subunits per hexamer contact DNA at a time. Coordinated motions by a converter formed by DNA-disengaged RuvB subunits stimulates ATP hydrolysis and nucleotide exchange. Immobilization of the converter enables RuvB to convert the ATP-contained energy into a lever motion, pulling 2 nucleotides of DNA out of the RuvA tetramer per ATP hydrolyzed, thus driving DNA branch migration. The RuvB motors rotate together with the DNA substrate, which together with the progressing nucleotide cycle form the mechanistic basis for DNA recombination by continuous HJ branch migration. Branch migration allows RuvC to scan DNA until it finds its consensus sequence, where it cleaves and resolves cruciform DNA. This chain is Holliday junction branch migration complex subunit RuvB, found in Stutzerimonas stutzeri (strain A1501) (Pseudomonas stutzeri).